The sequence spans 533 residues: Probable ADP-ribosylation factor-binding protein C25H2.16c (533 aa).

In terms of domain architecture, VHS spans 15–151; the sequence is ATEPYAFEPD…LLSYKGYTFP (137 aa). The GAT domain maps to 178–305; it reads REAMSAKLQE…LLTQYDHLLE (128 aa). Phosphoserine is present on Ser320. In terms of domain architecture, GAE spans 417–532; the sequence is NNFTSTCAFE…EYTGQSSIRL (116 aa).

This sequence belongs to the GGA protein family.

Its subcellular location is the golgi apparatus. The protein resides in the trans-Golgi network. Functionally, may play a role in the regulation of membrane traffic through the trans-Golgi network. The polypeptide is Probable ADP-ribosylation factor-binding protein C25H2.16c (Schizosaccharomyces pombe (strain 972 / ATCC 24843) (Fission yeast)).